The sequence spans 520 residues: Aldehyde dehydrogenase 5, mitochondrial (520 aa).

Residues 1-23 constitute a mitochondrion transit peptide; it reads MLSRTRAAAPNSRIFTRSLLRLY. 266–271 contributes to the NAD(+) binding site; sequence GSTATG. Glu-288 serves as the catalytic Proton acceptor. Residue Cys-322 is the Nucleophile of the active site.

It belongs to the aldehyde dehydrogenase family.

The protein resides in the mitochondrion matrix. It carries out the reaction an aldehyde + NADP(+) + H2O = a carboxylate + NADPH + 2 H(+). The enzyme catalyses an aldehyde + NAD(+) + H2O = a carboxylate + NADH + 2 H(+). It functions in the pathway alcohol metabolism; ethanol degradation; acetate from ethanol: step 2/2. Its activity is regulated as follows. Induced by potassium ions. Its function is as follows. Minor mitochondrial aldehyde dehydrogenase isoform. Plays a role in regulation or biosynthesis of electron transport chain components. Involved in the biosynthesis of acetate during anaerobic growth on glucose. The sequence is that of Aldehyde dehydrogenase 5, mitochondrial (ALD5) from Saccharomyces cerevisiae (strain YJM789) (Baker's yeast).